The chain runs to 238 residues: MIEANQILAKMKNQKINYDKVLRKIISQWERDGERPKILLHSCCAPCSTYTLEFLTQYADIAIYFANPNIHPKSEYLRRAKVQEQFVNDFNNKTGASVKYIEAEYEPHKFMKMAKDKGLTEEPEGGLRCTACFEMRLEIVAKAALEHGYDYFGSAITLSPKKNAQLINELGMDVQNIYNVKYLPSDFKKNKGYERSIEMCNDYNIFRQCYCGCVFAAMKQGIDFKQINKDAQAFLQQF.

4 residues coordinate [4Fe-4S] cluster: C43, C44, C129, and C132. A disulfide bridge links C211 with C213.

The protein belongs to the QueH family.

It catalyses the reaction epoxyqueuosine(34) in tRNA + AH2 = queuosine(34) in tRNA + A + H2O. It functions in the pathway tRNA modification; tRNA-queuosine biosynthesis. Catalyzes the conversion of epoxyqueuosine (oQ) to queuosine (Q), which is a hypermodified base found in the wobble positions of tRNA(Asp), tRNA(Asn), tRNA(His) and tRNA(Tyr). This chain is Epoxyqueuosine reductase QueH, found in Staphylococcus epidermidis (strain ATCC 12228 / FDA PCI 1200).